The sequence spans 409 residues: Elongation factor Tu (409 aa).

The tr-type G domain occupies 10-214; sequence KPHVNIGTIG…AVDDNIPEPE (205 aa). The interval 19 to 26 is G1; the sequence is GHVDHGKT. Position 19–26 (19–26) interacts with GTP; that stretch reads GHVDHGKT. Residue Thr-26 coordinates Mg(2+). Residues 60-64 form a G2 region; sequence GITIN. The tract at residues 81–84 is G3; that stretch reads DCPG. GTP-binding positions include 81–85 and 136–139; these read DCPGH and NKKD. Residues 136–139 are G4; the sequence is NKKD. Residues 174 to 176 are G5; the sequence is SAL.

The protein belongs to the TRAFAC class translation factor GTPase superfamily. Classic translation factor GTPase family. EF-Tu/EF-1A subfamily. As to quaternary structure, monomer.

It is found in the cytoplasm. The enzyme catalyses GTP + H2O = GDP + phosphate + H(+). In terms of biological role, GTP hydrolase that promotes the GTP-dependent binding of aminoacyl-tRNA to the A-site of ribosomes during protein biosynthesis. In Crocosphaera subtropica (strain ATCC 51142 / BH68) (Cyanothece sp. (strain ATCC 51142)), this protein is Elongation factor Tu.